The chain runs to 846 residues: Rho GTPase-activating protein 12 (846 aa).

Residues 12 to 74 (PGQVYIEVEY…PAQYVKEVTR (63 aa)) form the SH3 domain. A compositionally biased stretch (polar residues) spans 152 to 175 (LTHNNGKFNNDSHSPKVSSQNRTR). The segment at 152 to 241 (LTHNNGKFNN…PPNQGRPDSP (90 aa)) is disordered. Phosphoserine is present on residues Ser-165 and Ser-176. Polar residues predominate over residues 191–200 (TSFSQEQSCD). Phosphoserine occurs at positions 201, 213, and 215. Over residues 224–234 (TEQIRATTPPN) the composition is skewed to polar residues. 2 positions are modified to phosphothreonine: Thr-230 and Thr-231. Residue Ser-240 is modified to Phosphoserine. Tyr-243 is modified (phosphotyrosine). WW domains follow at residues 265–298 (IQIN…PPRW) and 358–391 (DYTN…LPKY). A disordered region spans residues 293-316 (WKPPRWTRDASISKGDFQNPGDQE). Disordered stretches follow at residues 428-466 (DTND…DQEK) and 580-629 (ETDE…TKKN). Polar residues predominate over residues 445-461 (NESSPSSPKHQDTASSP). A PH domain is found at 463–575 (DQEKYGLLNV…WFKVLSSTIN (113 aa)). Residues 580–590 (ETDEGIEEEIP) are compositionally biased toward acidic residues. The residue at position 592 (Ser-592) is a Phosphoserine. The segment covering 594–609 (GIEKHDKEKEQKDPKK) has biased composition (basic and acidic residues). Positions 656–844 (SNLANLCQRE…LILLELSSIF (189 aa)) constitute a Rho-GAP domain.

Its function is as follows. GTPase activator for the Rho-type GTPases by converting them to an inactive GDP-bound state. The polypeptide is Rho GTPase-activating protein 12 (ARHGAP12) (Homo sapiens (Human)).